The chain runs to 612 residues: Alpha-glycerophosphate oxidase (612 aa).

Residue 21–49 (DLLIIGGGITGAGVALQAAASGLDTGLIE) coordinates FAD. Residues 399 to 408 (ETSTSEKELD) show a composition bias toward basic and acidic residues. The interval 399 to 418 (ETSTSEKELDPSAVSRGSSF) is disordered.

Belongs to the FAD-dependent glycerol-3-phosphate dehydrogenase family. It depends on FAD as a cofactor.

It is found in the cytoplasm. The catalysed reaction is sn-glycerol 3-phosphate + O2 = dihydroxyacetone phosphate + H2O2. The chain is Alpha-glycerophosphate oxidase (glpO) from Streptococcus pyogenes serotype M1.